Consider the following 1056-residue polypeptide: E3 SUMO-protein ligase ZNF451 (1056 aa).

Residues Met-1–Leu-39 form a disordered region. Residues Met-1–Leu-246 form a sufficient for E3 SUMO-protein ligase activity region. The tract at residues Met-1–Val-344 is important for interaction with SUMO1 and SUMO2. The tract at residues Asp-30 to Gly-37 is interaction with SUMO2 1. The PLRP motif lies at Pro-38 to Pro-41. The segment at Val-42–Ser-50 is interaction with SUMO2 2. Glycyl lysine isopeptide (Lys-Gly) (interchain with G-Cter in SUMO2) cross-links involve residues Lys-75, Lys-77, Lys-106, Lys-139, and Lys-153. Ser-155 is modified (phosphoserine). Arg-158 carries the omega-N-methylarginine modification. A Glycyl lysine isopeptide (Lys-Gly) (interchain with G-Cter in SUMO2) cross-link involves residue Lys-167. The tract at residues Pro-168 to His-521 is important for interaction with SMAD4. The segment at Ile-169–His-195 adopts a C2H2-type 1 zinc-finger fold. The C2H2-type 2; degenerate zinc finger occupies Phe-212–Arg-234. The C2H2-type 3 zinc finger occupies Tyr-253 to His-277. Residues Lys-270, Lys-275, Lys-283, Lys-288, Lys-301, and Lys-309 each participate in a glycyl lysine isopeptide (Lys-Gly) (interchain with G-Cter in SUMO2) cross-link. Residues Val-315 to Cys-338 form a C2H2-type 4; atypical zinc finger. The C2H2-type 5 zinc-finger motif lies at Gly-362–His-385. A Glycyl lysine isopeptide (Lys-Gly) (interchain with G-Cter in SUMO2) cross-link involves residue Lys-420. At Ser-429 the chain carries Phosphoserine. Lys-431 is covalently cross-linked (Glycyl lysine isopeptide (Lys-Gly) (interchain with G-Cter in SUMO2)). 2 C2H2-type zinc fingers span residues Tyr-494 to His-517 and Phe-527 to His-550. Residues Lys-539 and Lys-583 each participate in a glycyl lysine isopeptide (Lys-Gly) (interchain with G-Cter in SUMO2) cross-link. Residues Trp-604–His-629 form a C2H2-type 8; atypical zinc finger. 2 C2H2-type zinc fingers span residues Tyr-634–His-657 and Tyr-665–His-688. Lys-645 is covalently cross-linked (Glycyl lysine isopeptide (Lys-Gly) (interchain with G-Cter in SUMO2)). A Glycyl lysine isopeptide (Lys-Gly) (interchain with G-Cter in SUMO1); alternate cross-link involves residue Lys-704. Lys-704 is covalently cross-linked (Glycyl lysine isopeptide (Lys-Gly) (interchain with G-Cter in SUMO2); alternate). Residues Lys-729 and Lys-746 each participate in a glycyl lysine isopeptide (Lys-Gly) (interchain with G-Cter in SUMO2) cross-link. 2 C2H2-type zinc fingers span residues Phe-751–His-774 and Ile-787–His-810. Residues Lys-788, Lys-815, Lys-843, Lys-849, Lys-947, Lys-988, and Lys-989 each participate in a glycyl lysine isopeptide (Lys-Gly) (interchain with G-Cter in SUMO2) cross-link. Disordered regions lie at residues Phe-806–Gln-830 and Glu-839–Glu-858. Residues Lys-849–Glu-858 show a composition bias toward basic and acidic residues. A disordered region spans residues Lys-1019 to Leu-1045. The segment covering Pro-1033–Leu-1045 has biased composition (basic and acidic residues). Positions Leu-1045 to Met-1056 are important for ubiquitin binding.

It belongs to the krueppel C2H2-type zinc-finger protein family. As to quaternary structure, homooligomer. Interacts (via N-terminal region) with SUMO1. Interacts (via N-terminal region) with SUMO2. Interacts simultaneously with two SUMO2 chains. Identified in a complex with SUMO2 and UBE2I/UBC9, where one ZNF451 interacts with one UBE2I/UBC9 and two SUMO2 chains, one bound to the UBE2I/UBC9 active site and the other to another region of the same UBE2I/UBC9 molecule. Interacts (via C-terminus) with ubiquitin. Interacts (via N-terminal zinc-finger domains) with SMAD4 (via MH2 domain). Interacts with SMAD2 and SMAD3. Identified in a complex that contains at least ZNF451, SMAD2, SMAD3 and SMAD4. Interacts with EP300. Inhibits interaction between EP300 and the SMAD4 complex. Interacts with SIMC1. Post-translationally, sumoylated. Predominantly sumoylated on the N-terminal region that is important for interaction with SUMO1 and SUMO2. Sumoylation is important for localization in nuclear granules; desumoylation leads to diffuse nucleoplasmic location. Autosumoylated (in vitro). Sumoylation enhances E3 SUMO-protein ligase activity.

The protein resides in the nucleus. The protein localises to the PML body. Its subcellular location is the nucleoplasm. It participates in protein modification; protein sumoylation. Functionally, E3 SUMO-protein ligase; has a preference for SUMO2 and SUMO3 and facilitates UBE2I/UBC9-mediated sumoylation of target proteins. Plays a role in protein SUMO2 modification in response to stress caused by DNA damage and by proteasome inhibitors (in vitro). Required for MCM4 sumoylation. Has no activity with SUMO1. Preferentially transfers an additional SUMO2 chain onto the SUMO2 consensus site 'Lys-11'. Negatively regulates transcriptional activation mediated by the SMAD4 complex in response to TGF-beta signaling. Inhibits EP300-mediated acetylation of histone H3 at 'Lys-9'. Plays a role in regulating the transcription of AR targets. This is E3 SUMO-protein ligase ZNF451 (Znf451) from Mus musculus (Mouse).